A 108-amino-acid chain; its full sequence is DNA-directed RNA polymerase III subunit RPC10 (108 aa).

Cysteine 5, cysteine 8, cysteine 25, cysteine 28, cysteine 69, and cysteine 72 together coordinate Zn(2+). The segment at 5 to 28 (CPGCGNGLIVEEGQRCHRFACNTC) adopts a C4-type zinc-finger fold. The TFIIS-type zinc finger occupies 65-107 (TAEPCPKCEHPRAYFMQLQTRSADEPMTTFYKCCNAQCGHRWR). Positions 88-89 (DE) match the Hairpin motif. Zn(2+) contacts are provided by cysteine 98 and cysteine 102.

It belongs to the archaeal RpoM/eukaryotic RPA12/RPB9/RPC11 RNA polymerase family. As to quaternary structure, component of the RNA polymerase III complex consisting of 17 subunits: a ten-subunit horseshoe-shaped catalytic core composed of POLR3A/RPC1, POLR3B/RPC2, POLR1C/RPAC1, POLR1D/RPAC2, POLR3K/RPC10, POLR2E/RPABC1, POLR2F/RPABC2, POLR2H/RPABC3, POLR2K/RPABC4 and POLR2L/RPABC5; a mobile stalk composed of two subunits POLR3H/RPC8 and CRCP/RPC9, protruding from the core and functioning primarily in transcription initiation; and additional subunits homologous to general transcription factors of the RNA polymerase II machinery, POLR3C/RPC3-POLR3F/RPC6-POLR3G/RPC7 heterotrimer required for transcription initiation and POLR3D/RPC4-POLR3E/RPC5 heterodimer involved in both transcription initiation and termination.

The protein localises to the nucleus. Functionally, core component of RNA polymerase III (Pol III) which synthesizes small non-coding RNAs using the four ribonucleoside triphosphates as substrates. Can mediate Pol I proofreading of the nascent RNA transcript. Anchors into the Pol III active site to constantly monitor transcription fidelity, cleaves mis-incorporated 5'-ribonucleotides and restarts the transcription process. Once Pol III reaches the poly(dT) termination signal, can induce Pol III clamp opening and transcription termination. Pol III plays an important role in sensing and limiting infection by intracellular bacteria and DNA viruses. Acts as a nuclear and cytosolic DNA sensor involved in innate immune response. Can sense non-self dsDNA that serves as template for transcription into dsRNA. The non-self RNA polymerase III transcripts, such as Epstein-Barr virus-encoded RNAs (EBERs) induce type I interferon and NF-kappa-B through the RIG-I pathway. This chain is DNA-directed RNA polymerase III subunit RPC10, found in Mus musculus (Mouse).